The sequence spans 135 residues: Large ribosomal subunit protein uL15 (135 aa).

The disordered stretch occupies residues 21 to 66 (VGRGQGSGMGKTATRGGKGQTARTGYKAKRGFEGGQQPLQRRLPKI).

It belongs to the universal ribosomal protein uL15 family. In terms of assembly, part of the 50S ribosomal subunit.

Binds to the 23S rRNA. The protein is Large ribosomal subunit protein uL15 of Helicobacter pylori (strain HPAG1).